The following is a 60-amino-acid chain: UPF0509 protein ESA_01586 (60 aa).

Belongs to the UPF0509 family.

The chain is UPF0509 protein ESA_01586 from Cronobacter sakazakii (strain ATCC BAA-894) (Enterobacter sakazakii).